Consider the following 277-residue polypeptide: Polar tube protein 2 (277 aa).

The signal sequence occupies residues 1-18 (MLLLLAITAVVSATMVHP). Asn-134 carries N-linked (GlcNAc...) asparagine glycosylation. Basic and acidic residues predominate over residues 237 to 251 (QKKEVKDTKEGEKSA). The segment at 237–277 (QKKEVKDTKEGEKSASQDSDGEGTAEDAEVQQPSADGEGLE) is disordered. Residues 255–265 (SDGEGTAEDAE) are compositionally biased toward acidic residues.

Interacts with PTP1 and PTP3.

The protein localises to the spore polar tube. Functionally, involved in formation of a polar tube through which the infectious agent is passed on to the host cell. The polypeptide is Polar tube protein 2 (PTP2) (Encephalitozoon cuniculi (strain GB-M1) (Microsporidian parasite)).